The following is a 171-amino-acid chain: Small ribosomal subunit protein uS5 (171 aa).

In terms of domain architecture, S5 DRBM spans 12 to 75 (LKEKLISVNR…EKARRNMIQV (64 aa)).

It belongs to the universal ribosomal protein uS5 family. In terms of assembly, part of the 30S ribosomal subunit. Contacts proteins S4 and S8.

In terms of biological role, with S4 and S12 plays an important role in translational accuracy. Its function is as follows. Located at the back of the 30S subunit body where it stabilizes the conformation of the head with respect to the body. The protein is Small ribosomal subunit protein uS5 of Buchnera aphidicola subsp. Baizongia pistaciae (strain Bp).